Consider the following 245-residue polypeptide: Chlorophyll a-b binding protein 1B-21, chloroplastic (245 aa).

The N-terminal 44 residues, 1 to 44, are a transit peptide targeting the chloroplast; that stretch reads MASSSGLRSCSAVGVPSLLAPSSRSGRSGLPFCAYATTSGRVTM. W48 provides a ligand contact to chlorophyll b. Chlorophyll a contacts are provided by F68, E87, and H90. Chlorophyll b is bound at residue R92. The helical transmembrane segment at 93 to 113 threads the bilayer; the sequence is WAMLCVPGVLVPEALGLGNWV. Residue L129 participates in chlorophyll a binding. A helical membrane pass occupies residues 132–152; that stretch reads PVPWGNLPTILAIEFLAIAFA. V133, E153, and R156 together coordinate chlorophyll b. Chlorophyll a contacts are provided by K190, E191, N194, R196, Q208, and H224.

It belongs to the light-harvesting chlorophyll a/b-binding (LHC) protein family. As to quaternary structure, the LHC complex consists of chlorophyll a-b binding proteins. Binds at least 14 chlorophylls (8 Chl-a and 6 Chl-b) and carotenoids such as lutein and neoxanthin. serves as cofactor. Photoregulated by reversible phosphorylation of its threonine residues.

The protein resides in the plastid. The protein localises to the chloroplast thylakoid membrane. Functionally, the light-harvesting complex (LHC) functions as a light receptor, it captures and delivers excitation energy to photosystems with which it is closely associated. In Hordeum vulgare (Barley), this protein is Chlorophyll a-b binding protein 1B-21, chloroplastic (LHC Ib-21).